A 101-amino-acid polypeptide reads, in one-letter code: Small ribosomal subunit protein uS14 (101 aa).

The protein belongs to the universal ribosomal protein uS14 family. As to quaternary structure, part of the 30S ribosomal subunit. Contacts proteins S3 and S10.

Binds 16S rRNA, required for the assembly of 30S particles and may also be responsible for determining the conformation of the 16S rRNA at the A site. The sequence is that of Small ribosomal subunit protein uS14 from Janthinobacterium sp. (strain Marseille) (Minibacterium massiliensis).